The primary structure comprises 120 residues: NADH-quinone oxidoreductase subunit A (120 aa).

The next 3 helical transmembrane spans lie at 6–26, 63–83, and 89–109; these read YGIIAVFLVGGAATAVAALAT, FLYALVFLLFDVETVFLYPWA, and LGLFAFAEMIVFIGILVLGLW.

Belongs to the complex I subunit 3 family. In terms of assembly, NDH-1 is composed of 14 different subunits. Subunits NuoA, H, J, K, L, M, N constitute the membrane sector of the complex.

The protein localises to the cell membrane. The enzyme catalyses a quinone + NADH + 5 H(+)(in) = a quinol + NAD(+) + 4 H(+)(out). In terms of biological role, NDH-1 shuttles electrons from NADH, via FMN and iron-sulfur (Fe-S) centers, to quinones in the respiratory chain. The immediate electron acceptor for the enzyme in this species is believed to be a menaquinone. Couples the redox reaction to proton translocation (for every two electrons transferred, four hydrogen ions are translocated across the cytoplasmic membrane), and thus conserves the redox energy in a proton gradient. The protein is NADH-quinone oxidoreductase subunit A of Moorella thermoacetica (strain ATCC 39073 / JCM 9320).